The following is a 301-amino-acid chain: Probable alpha-L-glutamate ligase (301 aa).

Residues 104–287 form the ATP-grasp domain; sequence LQLLSRKGVG…VAALVMEFIE (184 aa). ATP is bound by residues lysine 141, 178 to 179, aspartate 187, and 211 to 213; these read EY and RSN. Positions 248, 260, and 262 each coordinate Mg(2+). The Mn(2+) site is built by aspartate 248, glutamate 260, and asparagine 262.

The protein belongs to the RimK family. Mg(2+) is required as a cofactor. It depends on Mn(2+) as a cofactor.

This is Probable alpha-L-glutamate ligase from Saccharophagus degradans (strain 2-40 / ATCC 43961 / DSM 17024).